The sequence spans 570 residues: Glutamate--tRNA ligase (570 aa).

The 'HIGH' region motif lies at 107 to 117 (PNPDFVLHLGS).

Belongs to the class-I aminoacyl-tRNA synthetase family. Glutamate--tRNA ligase type 2 subfamily.

The protein localises to the cytoplasm. The catalysed reaction is tRNA(Glu) + L-glutamate + ATP = L-glutamyl-tRNA(Glu) + AMP + diphosphate. Catalyzes the attachment of glutamate to tRNA(Glu) in a two-step reaction: glutamate is first activated by ATP to form Glu-AMP and then transferred to the acceptor end of tRNA(Glu). This chain is Glutamate--tRNA ligase, found in Pyrobaculum aerophilum (strain ATCC 51768 / DSM 7523 / JCM 9630 / CIP 104966 / NBRC 100827 / IM2).